The following is a 1826-amino-acid chain: ATPase family AAA domain-containing protein 5 (1826 aa).

S44 carries the phosphoserine modification. Residue K127 forms a Glycyl lysine isopeptide (Lys-Gly) (interchain with G-Cter in SUMO2) linkage. 7 disordered regions span residues 170-254, 282-311, 323-367, 398-572, 588-623, 647-684, and 709-729; these read SIED…KRAD, PAVPACVPSGPGEAVKSGSEGELSGSCEPS, AQVH…RKSN, QQFM…EPGS, RSCSTPATNALGGTESEDAQDTIPVKASTPKSARTS, KFTRISTPKKSKKSSKKSETTEEELTSQKKKANSTSKN, and VVPLRRSSRHQARSAKEKSPE. S215 is subject to Phosphoserine. Positions 243 to 254 are enriched in basic and acidic residues; sequence NDSRTHATKRAD. A compositionally biased stretch (low complexity) spans 298 to 311; sequence SGSEGELSGSCEPS. 2 positions are modified to phosphoserine: S351 and S366. Positions 365-381 are interaction with WDR48; that stretch reads KSNVVIQEGQLELAVLE. A compositionally biased stretch (basic and acidic residues) spans 418-442; the sequence is KPLEKQKDPSEKSVHEGDSSSEKII. The segment covering 445-456 has biased composition (polar residues); sequence PNIQRVSSQGCL. The span at 459 to 468 shows a compositional bias: basic and acidic residues; the sequence is HADRGSFPKE. A compositionally biased stretch (basic residues) spans 469–481; it reads KSKKPNKKGKKTR. Residues 487 to 505 are compositionally biased toward basic and acidic residues; that stretch reads NREENIQKEKTAFSLKDEQ. Residues 540-559 are compositionally biased toward polar residues; sequence DSVQMSLCNRNKSRSSSTPT. 2 positions are modified to phosphoserine: S591 and S603. 2 positions are modified to phosphoserine: S727 and S801. A disordered region spans residues 965–1034; the sequence is GKQASPQLQP…NLDPSRDSGT (70 aa). Positions 1006–1019 are enriched in basic and acidic residues; sequence EEMKGRSKDLDERI. Position 1104 is a phosphoserine (S1104). 1119–1126 is a binding site for ATP; the sequence is GPTGVGKT. The disordered stretch occupies residues 1183-1216; that stretch reads YNIGKSPKKLNSPGKVVTSPRKLPPSSPKTSGQK. Residues 1415-1419 carry the LXCXE motif motif; it reads LVCSE. 2 disordered regions span residues 1527–1552 and 1592–1611; these read PASMGHLTRKQSKDQPLRKSQKRKQK and SNPEIKTQNSGFKPHSVPQP. An interaction with RAD51 and RFC5 region spans residues 1612-1701; the sequence is PKTLAEKKCC…ATAEALSFTE (90 aa).

This sequence belongs to the AAA ATPase family. In terms of assembly, component of a heteropentameric replication factor ATAD5 RFC-like complex composed of one large subunit (ATAD5) and four small subunits (RFC2, RFC3, RFC4 and RFC5). Within the ATAD5 RFC-like complex, interacts with RFC2, RFC4 and RFC5. Within the ATAD5 RFC-like complex, interacts directly via-N terminal with RAD51; the interactions is enhanced under replication stress. Interacts with RB1 predominantly in G1 phase via its LXCXE motif. Interacts with RAD9A in growing cells. The interaction with RAD9A is reduced after exposure to DNA replication-inhibiting agents. Interacts with BRD4. Interacts with PCNA. Interacts with deubiquitinating enzyme USP1, and its associated factor, WDR48. In terms of processing, ATR may stimulate the RAD9A dissociation. As to expression, expressed ubiquitously in all cell lines like teratocarcinoma, cell lymphoma, lymphoma.

It is found in the nucleus. Functionally, has an important role in DNA replication and in maintaining genome integrity during replication stress. Involved in a RAD9A-related damage checkpoint, a pathway that is important in determining whether DNA damage is compatible with cell survival or whether it requires cell elimination by apoptosis. Modulates the RAD9A interaction with BCL2 and thereby induces DNA damage-induced apoptosis. Promotes PCNA deubiquitination by recruiting the ubiquitin-specific protease 1 (USP1) and WDR48 thereby down-regulating the error-prone damage bypass pathway. As component of the ATAD5 RFC-like complex, regulates the function of the DNA polymerase processivity factor PCNA by unloading the ring-shaped PCNA homotrimer from DNA after replication during the S phase of the cell cycle. This seems to be dependent on its ATPase activity. Plays important roles in restarting stalled replication forks under replication stress, by unloading the PCNA homotrimer from DNA and recruiting RAD51 possibly through an ATR-dependent manner. Ultimately this enables replication fork regression, breakage, and eventual fork restart. Both the PCNA unloading activity and the interaction with WDR48 are required to efficiently recruit RAD51 to stalled replication forks. Promotes the generation of MUS81-mediated single-stranded DNA-associated breaks in response to replication stress, which is an alternative pathway to restart stalled/regressed replication forks. The sequence is that of ATPase family AAA domain-containing protein 5 (Atad5) from Mus musculus (Mouse).